Here is a 435-residue protein sequence, read N- to C-terminus: Citrate synthase (435 aa).

Active-site residues include His311 and Asp370.

Belongs to the citrate synthase family.

It carries out the reaction oxaloacetate + acetyl-CoA + H2O = citrate + CoA + H(+). Its pathway is carbohydrate metabolism; tricarboxylic acid cycle; isocitrate from oxaloacetate: step 1/2. This chain is Citrate synthase (gltA), found in Rickettsia bellii (strain RML369-C).